The sequence spans 497 residues: Aspartyl/glutamyl-tRNA(Asn/Gln) amidotransferase subunit B (497 aa).

The protein belongs to the GatB/GatE family. GatB subfamily. In terms of assembly, heterotrimer of A, B and C subunits.

It carries out the reaction L-glutamyl-tRNA(Gln) + L-glutamine + ATP + H2O = L-glutaminyl-tRNA(Gln) + L-glutamate + ADP + phosphate + H(+). The enzyme catalyses L-aspartyl-tRNA(Asn) + L-glutamine + ATP + H2O = L-asparaginyl-tRNA(Asn) + L-glutamate + ADP + phosphate + 2 H(+). Its function is as follows. Allows the formation of correctly charged Asn-tRNA(Asn) or Gln-tRNA(Gln) through the transamidation of misacylated Asp-tRNA(Asn) or Glu-tRNA(Gln) in organisms which lack either or both of asparaginyl-tRNA or glutaminyl-tRNA synthetases. The reaction takes place in the presence of glutamine and ATP through an activated phospho-Asp-tRNA(Asn) or phospho-Glu-tRNA(Gln). This Novosphingobium aromaticivorans (strain ATCC 700278 / DSM 12444 / CCUG 56034 / CIP 105152 / NBRC 16084 / F199) protein is Aspartyl/glutamyl-tRNA(Asn/Gln) amidotransferase subunit B.